The sequence spans 83 residues: Small ribosomal subunit protein bS16 (83 aa).

Belongs to the bacterial ribosomal protein bS16 family.

This is Small ribosomal subunit protein bS16 from Aromatoleum aromaticum (strain DSM 19018 / LMG 30748 / EbN1) (Azoarcus sp. (strain EbN1)).